A 352-amino-acid polypeptide reads, in one-letter code: GTPase Obg (352 aa).

The Obg domain maps to 1-159 (MHFLDQAKIY…MWVWLRLKLL (159 aa)). In terms of domain architecture, OBG-type G spans 160–327 (ADVGLLGLPN…LLDAVLGYLP (168 aa)). GTP contacts are provided by residues 166–173 (GLPNAGKS), 191–195 (FTTLV), 212–215 (DIPG), 279–282 (NKLD), and 308–310 (SGA). The Mg(2+) site is built by S173 and T193. Residues 329-352 (STSTETKGSEVEEVDEEGGEWSPI) form a disordered region. Positions 339 to 352 (VEEVDEEGGEWSPI) are enriched in acidic residues.

It belongs to the TRAFAC class OBG-HflX-like GTPase superfamily. OBG GTPase family. Monomer. The cofactor is Mg(2+).

The protein localises to the cytoplasm. Its function is as follows. An essential GTPase which binds GTP, GDP and possibly (p)ppGpp with moderate affinity, with high nucleotide exchange rates and a fairly low GTP hydrolysis rate. Plays a role in control of the cell cycle, stress response, ribosome biogenesis and in those bacteria that undergo differentiation, in morphogenesis control. The protein is GTPase Obg of Erythrobacter litoralis (strain HTCC2594).